We begin with the raw amino-acid sequence, 388 residues long: Zinc finger CCCH domain-containing protein 47 (388 aa).

Disordered regions lie at residues 1–130 (MADP…MAPL) and 144–282 (PLHE…TPSA). Basic and acidic residues-rich tracts occupy residues 61 to 109 (AAND…KSEV) and 181 to 193 (PDNH…HLPR). The span at 260–274 (ASSSSSSSSAGQQGS) shows a compositional bias: low complexity. 2 C3H1-type zinc fingers span residues 321-348 (HHKI…HGEE) and 359-388 (GGGG…HGGV).

This Oryza sativa subsp. japonica (Rice) protein is Zinc finger CCCH domain-containing protein 47.